Consider the following 227-residue polypeptide: NAD(P)H-quinone oxidoreductase subunit K, chloroplastic (227 aa).

Residues C43, C44, C108, and C139 each contribute to the [4Fe-4S] cluster site. Positions 173-192 are enriched in polar residues; the sequence is RSFTTNHKFQVGRSSHTGNY. Residues 173-201 form a disordered region; the sequence is RSFTTNHKFQVGRSSHTGNYDQGFLSKPP.

It belongs to the complex I 20 kDa subunit family. NDH is composed of at least 16 different subunits, 5 of which are encoded in the nucleus. Requires [4Fe-4S] cluster as cofactor.

It localises to the plastid. It is found in the chloroplast thylakoid membrane. The catalysed reaction is a plastoquinone + NADH + (n+1) H(+)(in) = a plastoquinol + NAD(+) + n H(+)(out). It catalyses the reaction a plastoquinone + NADPH + (n+1) H(+)(in) = a plastoquinol + NADP(+) + n H(+)(out). NDH shuttles electrons from NAD(P)H:plastoquinone, via FMN and iron-sulfur (Fe-S) centers, to quinones in the photosynthetic chain and possibly in a chloroplast respiratory chain. The immediate electron acceptor for the enzyme in this species is believed to be plastoquinone. Couples the redox reaction to proton translocation, and thus conserves the redox energy in a proton gradient. The polypeptide is NAD(P)H-quinone oxidoreductase subunit K, chloroplastic (Trachelium caeruleum (Blue throatwort)).